Here is a 187-residue protein sequence, read N- to C-terminus: Peptidyl-tRNA hydrolase (187 aa).

Y14 lines the tRNA pocket. The active-site Proton acceptor is H19. 3 residues coordinate tRNA: Y64, N66, and N112.

The protein belongs to the PTH family. As to quaternary structure, monomer.

Its subcellular location is the cytoplasm. It carries out the reaction an N-acyl-L-alpha-aminoacyl-tRNA + H2O = an N-acyl-L-amino acid + a tRNA + H(+). In terms of biological role, hydrolyzes ribosome-free peptidyl-tRNAs (with 1 or more amino acids incorporated), which drop off the ribosome during protein synthesis, or as a result of ribosome stalling. Functionally, catalyzes the release of premature peptidyl moieties from peptidyl-tRNA molecules trapped in stalled 50S ribosomal subunits, and thus maintains levels of free tRNAs and 50S ribosomes. This is Peptidyl-tRNA hydrolase from Clostridium acetobutylicum (strain ATCC 824 / DSM 792 / JCM 1419 / IAM 19013 / LMG 5710 / NBRC 13948 / NRRL B-527 / VKM B-1787 / 2291 / W).